Reading from the N-terminus, the 53-residue chain is uncharacterized protein (53 aa).

Residues 14 to 33 (SPSSLNNNNNINSKSLQINS) are compositionally biased toward low complexity. Positions 14-53 (SPSSLNNNNNINSKSLQINSENKSKIQNNNPLGNKGGVQF) are disordered.

This is an uncharacterized protein from Dictyostelium discoideum (Social amoeba).